We begin with the raw amino-acid sequence, 426 residues long: Isocitrate dehydrogenase [NADP] (426 aa).

Serine 123, asparagine 125, arginine 129, arginine 139, and arginine 162 together coordinate D-threo-isocitrate. Aspartate 312 serves as a coordination point for Mg(2+). Residues 344-350 (HGTAWDI), asparagine 357, and lysine 404 contribute to the NADP(+) site.

It belongs to the isocitrate and isopropylmalate dehydrogenases family. As to quaternary structure, homodimer. Requires Mg(2+) as cofactor. Mn(2+) is required as a cofactor.

It catalyses the reaction D-threo-isocitrate + NADP(+) = 2-oxoglutarate + CO2 + NADPH. Catalyzes the oxidative decarboxylation of isocitrate to 2-oxoglutarate and carbon dioxide with the concomitant reduction of NADP(+). The polypeptide is Isocitrate dehydrogenase [NADP] (icd) (Aquifex aeolicus (strain VF5)).